Reading from the N-terminus, the 297-residue chain is MTPRVSDPFTGQSIESARRTLAARLRSAQLEEAELDARILLGAALGLDLTGLIAQAARLLTEAEASRIAQHAQRRIAGEPVARILGTREFWGLPFRLSDATLVPRPDTETVVERALELFREQKATQQPRIADIGTGSGAILLALLHDIPGAFGVGTDLSLNALETARGNAVTLGLADRSAFVACSYLAALRGPFDLIVSNPPYIPSAEIPKLSLEVREHDPHLALDGGNDGYDAYRALIPQAAERLAPGGALIVEAGQGQARNIETLLTAAALVVDRPPKADLAGIPRAVSARKMPP.

Residues glycine 134 to glycine 138, aspartate 157, and asparagine 200 contribute to the S-adenosyl-L-methionine site. A substrate-binding site is contributed by asparagine 200 to tyrosine 203.

It belongs to the protein N5-glutamine methyltransferase family. PrmC subfamily.

It catalyses the reaction L-glutaminyl-[peptide chain release factor] + S-adenosyl-L-methionine = N(5)-methyl-L-glutaminyl-[peptide chain release factor] + S-adenosyl-L-homocysteine + H(+). In terms of biological role, methylates the class 1 translation termination release factors RF1/PrfA and RF2/PrfB on the glutamine residue of the universally conserved GGQ motif. The polypeptide is Release factor glutamine methyltransferase (Bradyrhizobium diazoefficiens (strain JCM 10833 / BCRC 13528 / IAM 13628 / NBRC 14792 / USDA 110)).